Here is a 134-residue protein sequence, read N- to C-terminus: Large ribosomal subunit protein uL14 (134 aa).

It belongs to the universal ribosomal protein uL14 family. In the 70S ribosome, L14 and L19 interact and together make contacts with the 16S rRNA in bridges B5 and B8. Part of the 50S ribosomal subunit. Forms a cluster with proteins L3 and L19.

Forms part of two intersubunit bridges in the 70S ribosome. Binds to 23S rRNA. This is Large ribosomal subunit protein uL14 from Deinococcus radiodurans (strain ATCC 13939 / DSM 20539 / JCM 16871 / CCUG 27074 / LMG 4051 / NBRC 15346 / NCIMB 9279 / VKM B-1422 / R1).